The following is a 245-amino-acid chain: MKRVAAVIEYDGSNFFGYQGQPDVRTVQGVIEDALERIFKQRIYIQAAGRTDTGVHANGQLIAFNCPNDRMTTEDIRNAMNANLPDDVYVKEVFEVPVNFHPRFDVTKRIYHYFILTSRQKNVFLRKYVWWFPYELDLDAMRKAVKYLEGTHDFTSFKTGSDERDPVRTIYRIRILRLKNDLVLIRVEGRSFLRRMVRNIVAALVKVGLKQWEPEKMKEVLEARDRSAAAGTAPAHGLYFYKVLF.

The active-site Nucleophile is aspartate 52. Tyrosine 111 serves as a coordination point for substrate.

Belongs to the tRNA pseudouridine synthase TruA family. Homodimer.

The enzyme catalyses uridine(38/39/40) in tRNA = pseudouridine(38/39/40) in tRNA. In terms of biological role, formation of pseudouridine at positions 38, 39 and 40 in the anticodon stem and loop of transfer RNAs. This chain is tRNA pseudouridine synthase A, found in Thermotoga petrophila (strain ATCC BAA-488 / DSM 13995 / JCM 10881 / RKU-1).